The following is a 273-amino-acid chain: 4-hydroxy-tetrahydrodipicolinate reductase (273 aa).

Residues Gly12–Met17 and Glu38 each bind NAD(+). An NADP(+)-binding site is contributed by Arg39. NAD(+) contacts are provided by residues Gly102–Thr104 and Ala126–Phe129. The active-site Proton donor/acceptor is His159. Residue His160 participates in (S)-2,3,4,5-tetrahydrodipicolinate binding. The active-site Proton donor is the Lys163. (S)-2,3,4,5-tetrahydrodipicolinate is bound at residue Gly169–Thr170.

The protein belongs to the DapB family. In terms of assembly, homotetramer.

It is found in the cytoplasm. It catalyses the reaction (S)-2,3,4,5-tetrahydrodipicolinate + NAD(+) + H2O = (2S,4S)-4-hydroxy-2,3,4,5-tetrahydrodipicolinate + NADH + H(+). The enzyme catalyses (S)-2,3,4,5-tetrahydrodipicolinate + NADP(+) + H2O = (2S,4S)-4-hydroxy-2,3,4,5-tetrahydrodipicolinate + NADPH + H(+). The protein operates within amino-acid biosynthesis; L-lysine biosynthesis via DAP pathway; (S)-tetrahydrodipicolinate from L-aspartate: step 4/4. Its function is as follows. Catalyzes the conversion of 4-hydroxy-tetrahydrodipicolinate (HTPA) to tetrahydrodipicolinate. The sequence is that of 4-hydroxy-tetrahydrodipicolinate reductase from Shigella flexneri.